A 420-amino-acid polypeptide reads, in one-letter code: Ribosome biogenesis protein WDR12 homolog (420 aa).

The tract at residues 10–92 (VQVHLKTKQE…EDAIEIEYVE (83 aa)) is ubiquitin-like (UBL) domain. WD repeat units lie at residues 104–142 (LHDDWVSAVKARGKWILSGCYDNSLNLWTNKGKHILTIS), 143–185 (GHTA…NAVD), 192–231 (GHERGVDSVSVSPDGLRFATGSWDTMLKVWSAELDDGVEG), 250–288 (GHRESVSAVQWMDATTLLTGSWDYTLKVWDLSLEGIKTE), 290–329 (STNKSIFDASYSKLNRLILTASADKNLRLYDPRTNQGSVV), 335–375 (GHNA…APLY), and 379–417 (GHGDKVLDIDWSNPKYIVSGGVDNTVRVFKSRKALAEDT).

Belongs to the WD repeat WDR12/YTM1 family.

It is found in the nucleus. Its subcellular location is the nucleolus. It localises to the nucleoplasm. In terms of biological role, required for maturation of ribosomal RNAs and formation of the large ribosomal subunit. The protein is Ribosome biogenesis protein WDR12 homolog of Drosophila sechellia (Fruit fly).